The chain runs to 303 residues: Bidirectional sugar transporter SWEET14 (303 aa).

Residues 1–9 (MAGMSLQHP) are Extracellular-facing. The helical transmembrane segment at 10 to 30 (WAFAFGLLGNIISFMTYLAPL) threads the bilayer. The MtN3/slv 1 domain occupies 13 to 98 (AFGLLGNIIS…AVYLVYAPKK (86 aa)). At 31–44 (PTFYRIYKSKSTQG) the chain is on the cytoplasmic side. The chain crosses the membrane as a helical span at residues 45-65 (FQSVPYVVALFSAMLWIYYAL). Topologically, residues 66–72 (LKSDECL) are extracellular. The chain crosses the membrane as a helical span at residues 73 to 93 (LITINSAGCVIETIYIAVYLV). Residues 94–105 (YAPKKAKMFTAK) are Cytoplasmic-facing. The chain crosses the membrane as a helical span at residues 106–126 (LLLLVNVGVFGLILLLTLLLS). Residues 127-133 (AGDRRIV) are Extracellular-facing. Residues 134–154 (VLGWVCVGFSVSVFVAPLSII) form a helical membrane-spanning segment. The MtN3/slv 2 domain occupies 134–217 (VLGWVCVGFS…MGLYAMYRNS (84 aa)). Residues 155–167 (RLVVRTKSVEFMP) are Cytoplasmic-facing. Residues 168-188 (FSLSFSLTISAVVWFLYGLLI) traverse the membrane as a helical segment. At 189-192 (KDKY) the chain is on the extracellular side. Residues 193–213 (VALPNVLGFSFGVIQMGLYAM) form a helical membrane-spanning segment. Residues 214–303 (YRNSTPKAVL…AGAGEKKVAA (90 aa)) are Cytoplasmic-facing. The disordered stretch occupies residues 266–290 (HPVDVESPPAEAPPEEDDKAAAATA).

The protein belongs to the SWEET sugar transporter family. Forms homooligomers and/or heterooligomers.

Its subcellular location is the cell membrane. Functionally, mediates both low-affinity uptake and efflux of sugar across the plasma membrane. Confers blight susceptibility. Confers TAL effector-mediated susceptibility to Xanthomonas oryzae pv. oryzae. This chain is Bidirectional sugar transporter SWEET14 (SWEET14), found in Oryza sativa subsp. japonica (Rice).